The following is a 103-amino-acid chain: Large ribosomal subunit protein bL21 (103 aa).

It belongs to the bacterial ribosomal protein bL21 family. In terms of assembly, part of the 50S ribosomal subunit. Contacts protein L20.

Its function is as follows. This protein binds to 23S rRNA in the presence of protein L20. The sequence is that of Large ribosomal subunit protein bL21 from Chloroflexus aggregans (strain MD-66 / DSM 9485).